Here is a 393-residue protein sequence, read N- to C-terminus: E3 ubiquitin-protein transferase RMND5B (393 aa).

Position 1 is an N-acetylmethionine (methionine 1). The 33-residue stretch at 116–148 (QQQILQMAIVEHLYQQGMLSVAEELCQESTLNV) folds into the LisH domain. In terms of domain architecture, CTLH spans 155 to 212 (PFLELNRILEALHEQDLGPALEWAVSHRQRLLELNSSLEFKLHRLHFIRLLAGGPEKQ). Residues 338-379 (CPILRQQTSDSNPPIKLICGHVISRDALNKLINGGKLKCPYC) form an RING-Gid-type zinc finger.

In terms of assembly, identified in the CTLH complex that contains GID4, RANBP9 and/or RANBP10, MKLN1, MAEA, RMND5A (or alternatively its paralog RMND5B), GID8, ARMC8, WDR26 and YPEL5. Within this complex, MAEA, RMND5A (or alternatively its paralog RMND5B), GID8, WDR26, and RANBP9 and/or RANBP10 form the catalytic core, while GID4, MKLN1, ARMC8 and YPEL5 have ancillary roles.

The protein resides in the cytoplasm. The protein localises to the cytosol. It carries out the reaction S-ubiquitinyl-[E2 ubiquitin-conjugating enzyme]-L-cysteine + [acceptor protein]-L-lysine = [E2 ubiquitin-conjugating enzyme]-L-cysteine + N(6)-ubiquitinyl-[acceptor protein]-L-lysine.. Core component of the CTLH E3 ubiquitin-protein ligase complex that selectively accepts ubiquitin from UBE2H and mediates ubiquitination and subsequent proteasomal degradation of the transcription factor HBP1. MAEA and RMND5A are both required for catalytic activity of the CTLH E3 ubiquitin-protein ligase complex. Catalytic activity of the complex is required for normal cell proliferation. The CTLH E3 ubiquitin-protein ligase complex is not required for the degradation of enzymes involved in gluconeogenesis, such as FBP1. This is E3 ubiquitin-protein transferase RMND5B (Rmnd5b) from Mus musculus (Mouse).